A 365-amino-acid chain; its full sequence is Ribosomal RNA large subunit methyltransferase F (365 aa).

Residues Met1–Arg49 form a disordered region. Positions Ala33–Arg49 are enriched in basic and acidic residues.

The protein belongs to the methyltransferase superfamily. METTL16/RlmF family.

It is found in the cytoplasm. The enzyme catalyses adenosine(1618) in 23S rRNA + S-adenosyl-L-methionine = N(6)-methyladenosine(1618) in 23S rRNA + S-adenosyl-L-homocysteine + H(+). In terms of biological role, specifically methylates the adenine in position 1618 of 23S rRNA. This chain is Ribosomal RNA large subunit methyltransferase F, found in Shewanella baltica (strain OS185).